We begin with the raw amino-acid sequence, 200 residues long: Phospholipase A2 inhibitor gamma subunit B (200 aa).

Positions 1–19 (MKFLLFCCLFGTFLATGMC) are cleaved as a signal peptide. 8 cysteine pairs are disulfide-bonded: Cys-22–Cys-46, Cys-25–Cys-32, Cys-39–Cys-67, Cys-73–Cys-94, Cys-95–Cys-100, Cys-120–Cys-145, Cys-138–Cys-165, and Cys-171–Cys-191.

The protein belongs to the CNF-like-inhibitor family. As to quaternary structure, heteromer composed of subunit A and subunit B.

The protein resides in the secreted. Its function is as follows. Inhibits the enzymatic activity of the phospholipase A2 (PLA2). The chain is Phospholipase A2 inhibitor gamma subunit B from Elaphe climacophora (Japanese rat snake).